Consider the following 119-residue polypeptide: MPRVKRGFKARRRRNRVLNQTEGYFLGRKNRFRQAVEVLRHAWEYGYISRKLKKRDFRRLWITRINAAARLNGTTYSRLVSGLKKAGIALDRKILSEIAIHDPASFGAVAKLASPAAAK.

The protein belongs to the bacterial ribosomal protein bL20 family.

Its function is as follows. Binds directly to 23S ribosomal RNA and is necessary for the in vitro assembly process of the 50S ribosomal subunit. It is not involved in the protein synthesizing functions of that subunit. This Sorangium cellulosum (strain So ce56) (Polyangium cellulosum (strain So ce56)) protein is Large ribosomal subunit protein bL20.